Consider the following 525-residue polypeptide: D-arabinono-1,4-lactone oxidase (525 aa).

The 175-residue stretch at 23–197 (YSCRPQLYFQ…VKATIRVIPE (175 aa)) folds into the FAD-binding PCMH-type domain. Pros-8alpha-FAD histidine is present on His60.

Belongs to the oxygen-dependent FAD-linked oxidoreductase family. It depends on FAD as a cofactor.

The protein localises to the mitochondrion membrane. The enzyme catalyses D-arabinono-1,4-lactone + O2 = dehydro-D-arabinono-1,4-lactone + H2O2 + H(+). It participates in cofactor biosynthesis; D-erythroascorbate biosynthesis; dehydro-D-arabinono-1,4-lactone from D-arabinose: step 2/2. In Kluyveromyces lactis (strain ATCC 8585 / CBS 2359 / DSM 70799 / NBRC 1267 / NRRL Y-1140 / WM37) (Yeast), this protein is D-arabinono-1,4-lactone oxidase (ALO1).